Reading from the N-terminus, the 498-residue chain is Minor fimbrium subunit Mfa1 (498 aa).

Residues 1 to 19 form the signal peptide; the sequence is MKLNKMFLVGALLSLGFAS. The N-palmitoyl cysteine moiety is linked to residue cysteine 20. Cysteine 20 carries S-diacylglycerol cysteine lipidation. The propeptide occupies 20–50; that stretch reads CSKEGNGPAPDSSSTADTHMSVSMSLPQHNR. Residues 436–476 form a disordered region; it reads SGNPFVPTDPDPNNPDTPDNPDTPDPEDPDTPNPEEPLPVQ.

Belongs to the bacteroidetes fimbrillin superfamily. FimA/Mfa1 family. Structural component of the fimbrial stalk. Minor fimbriae are composed of a structural subunit, most often Mfa1, and the accessory subunits Mfa3, Mfa4 and Mfa5. Mfa1 interacts with Mfa2; this anchors the fimbrium in the membrane. Fimbrium assembly occurs by linear, head-to-tail oligomerization of fimbrial subunits. This is mediated via insertion of a C-terminal beta-strand from one subunit into a groove in the N-terminal domain of the following subunit.

It is found in the fimbrium. It localises to the cell outer membrane. Structural subunit of the minor fimbriae. These filamentous pili are attached to the cell surface; they mediate biofilm formation, adhesion onto host cells and onto other bacteria that are part of the oral microbiome. They play an important role in invasion of periodontal tissues and are recognized as major virulence factors. Mfa1 orthologs from different strains have highly divergent sequences, and this correlates with pathogenicity. The polypeptide is Minor fimbrium subunit Mfa1 (Porphyromonas gingivalis (Bacteroides gingivalis)).